Reading from the N-terminus, the 319-residue chain is GTP cyclohydrolase MptA (319 aa).

Belongs to the GTP cyclohydrolase IV family. Homodimer. Requires Fe(2+) as cofactor.

It catalyses the reaction GTP + H2O = 7,8-dihydroneopterin 2',3'-cyclic phosphate + formate + diphosphate + H(+). Its pathway is cofactor biosynthesis; 5,6,7,8-tetrahydromethanopterin biosynthesis. Converts GTP to 7,8-dihydro-D-neopterin 2',3'-cyclic phosphate, the first intermediate in the biosynthesis of coenzyme methanopterin. This Methanosarcina barkeri (strain Fusaro / DSM 804) protein is GTP cyclohydrolase MptA.